Reading from the N-terminus, the 126-residue chain is Large ribosomal subunit protein bL12 (126 aa).

The protein belongs to the bacterial ribosomal protein bL12 family. In terms of assembly, homodimer. Part of the ribosomal stalk of the 50S ribosomal subunit. Forms a multimeric L10(L12)X complex, where L10 forms an elongated spine to which 2 to 4 L12 dimers bind in a sequential fashion. Binds GTP-bound translation factors.

Its function is as follows. Forms part of the ribosomal stalk which helps the ribosome interact with GTP-bound translation factors. Is thus essential for accurate translation. The polypeptide is Large ribosomal subunit protein bL12 (Caulobacter sp. (strain K31)).